A 636-amino-acid polypeptide reads, in one-letter code: Protein SOSEKI 2 (636 aa).

Residues histidine 9–aspartate 103 form a DIX-like oligomerization domain region. Disordered regions lie at residues valine 164–proline 188, histidine 281–isoleucine 304, valine 340–lysine 393, and leucine 499–proline 524. Composition is skewed to polar residues over residues serine 375–threonine 390 and leucine 499–proline 510.

Belongs to the SOSEKI family. Homodimer. Forms long polymer filaments with other SOKs proteins polymers crucial for polar localization and biological activity.

The protein resides in the cell membrane. In terms of biological role, SOSEKI proteins locally interpret global polarity cues and can influence cell division orientation to coordinate cell polarization relative to body axes. This chain is Protein SOSEKI 2, found in Physcomitrium patens (Spreading-leaved earth moss).